Here is a 1188-residue protein sequence, read N- to C-terminus: DNA-directed RNA polymerase subunit beta (1188 aa).

Belongs to the RNA polymerase beta chain family. The RNAP catalytic core consists of 2 alpha, 1 beta, 1 beta' and 1 omega subunit. When a sigma factor is associated with the core the holoenzyme is formed, which can initiate transcription.

It catalyses the reaction RNA(n) + a ribonucleoside 5'-triphosphate = RNA(n+1) + diphosphate. DNA-dependent RNA polymerase catalyzes the transcription of DNA into RNA using the four ribonucleoside triphosphates as substrates. The sequence is that of DNA-directed RNA polymerase subunit beta from Streptococcus gordonii (strain Challis / ATCC 35105 / BCRC 15272 / CH1 / DL1 / V288).